Reading from the N-terminus, the 94-residue chain is Large ribosomal subunit protein bL25 (94 aa).

It belongs to the bacterial ribosomal protein bL25 family. In terms of assembly, part of the 50S ribosomal subunit; part of the 5S rRNA/L5/L18/L25 subcomplex. Contacts the 5S rRNA. Binds to the 5S rRNA independently of L5 and L18.

In terms of biological role, this is one of the proteins that binds to the 5S RNA in the ribosome where it forms part of the central protuberance. This chain is Large ribosomal subunit protein bL25, found in Cronobacter sakazakii (strain ATCC BAA-894) (Enterobacter sakazakii).